The primary structure comprises 348 residues: Holliday junction branch migration complex subunit RuvB (348 aa).

The large ATPase domain (RuvB-L) stretch occupies residues 1–183 (MAPQPRRLIA…FGIPIRLEYY (183 aa)). ATP contacts are provided by residues L22, R23, G64, K67, T68, T69, 130-132 (EDF), R173, Y183, and R220. T68 provides a ligand contact to Mg(2+). The tract at residues 184-254 (TVEELECIVR…VADRALRLLD (71 aa)) is small ATPAse domain (RuvB-S). The segment at 257 to 348 (HIGLDQMDRR…FQLFSEGGEE (92 aa)) is head domain (RuvB-H). Residues R293, R312, and R317 each coordinate DNA.

Belongs to the RuvB family. In terms of assembly, homohexamer. Forms an RuvA(8)-RuvB(12)-Holliday junction (HJ) complex. HJ DNA is sandwiched between 2 RuvA tetramers; dsDNA enters through RuvA and exits via RuvB. An RuvB hexamer assembles on each DNA strand where it exits the tetramer. Each RuvB hexamer is contacted by two RuvA subunits (via domain III) on 2 adjacent RuvB subunits; this complex drives branch migration. In the full resolvosome a probable DNA-RuvA(4)-RuvB(12)-RuvC(2) complex forms which resolves the HJ.

The protein resides in the cytoplasm. The enzyme catalyses ATP + H2O = ADP + phosphate + H(+). Functionally, the RuvA-RuvB-RuvC complex processes Holliday junction (HJ) DNA during genetic recombination and DNA repair, while the RuvA-RuvB complex plays an important role in the rescue of blocked DNA replication forks via replication fork reversal (RFR). RuvA specifically binds to HJ cruciform DNA, conferring on it an open structure. The RuvB hexamer acts as an ATP-dependent pump, pulling dsDNA into and through the RuvAB complex. RuvB forms 2 homohexamers on either side of HJ DNA bound by 1 or 2 RuvA tetramers; 4 subunits per hexamer contact DNA at a time. Coordinated motions by a converter formed by DNA-disengaged RuvB subunits stimulates ATP hydrolysis and nucleotide exchange. Immobilization of the converter enables RuvB to convert the ATP-contained energy into a lever motion, pulling 2 nucleotides of DNA out of the RuvA tetramer per ATP hydrolyzed, thus driving DNA branch migration. The RuvB motors rotate together with the DNA substrate, which together with the progressing nucleotide cycle form the mechanistic basis for DNA recombination by continuous HJ branch migration. Branch migration allows RuvC to scan DNA until it finds its consensus sequence, where it cleaves and resolves cruciform DNA. This Methylocella silvestris (strain DSM 15510 / CIP 108128 / LMG 27833 / NCIMB 13906 / BL2) protein is Holliday junction branch migration complex subunit RuvB.